We begin with the raw amino-acid sequence, 430 residues long: Probable sugar isomerase mlr5709 (430 aa).

Mn(2+) is bound by residues His-257, Asp-289, and Asp-291.

This sequence belongs to the rhamnose isomerase family. Mn(2+) is required as a cofactor.

This chain is Probable sugar isomerase mlr5709, found in Mesorhizobium japonicum (strain LMG 29417 / CECT 9101 / MAFF 303099) (Mesorhizobium loti (strain MAFF 303099)).